Here is a 165-residue protein sequence, read N- to C-terminus: Large ribosomal subunit protein eL15 (165 aa).

The interval 126 to 147 (TSAGRKSRGLGKGHKFHHTIGG) is disordered. Basic residues predominate over residues 130–143 (RKSRGLGKGHKFHH).

Belongs to the eukaryotic ribosomal protein eL15 family. As to quaternary structure, component of the large ribosomal subunit.

Its subcellular location is the cytoplasm. In terms of biological role, component of the large ribosomal subunit. The ribosome is a large ribonucleoprotein complex responsible for the synthesis of proteins in the cell. The protein is Large ribosomal subunit protein eL15 (RPL15) of Gallus gallus (Chicken).